Consider the following 180-residue polypeptide: Phosphoribosylaminoimidazole carboxylase (180 aa).

Substrate is bound by residues S35, D38, S62, K65, G89, and S91.

It belongs to the AIR carboxylase family. Class II subfamily.

The enzyme catalyses 5-amino-1-(5-phospho-D-ribosyl)imidazole-4-carboxylate + H(+) = 5-amino-1-(5-phospho-beta-D-ribosyl)imidazole + CO2. Its pathway is purine metabolism; IMP biosynthesis via de novo pathway; 5-amino-1-(5-phospho-D-ribosyl)imidazole-4-carboxylate from 5-amino-1-(5-phospho-D-ribosyl)imidazole (carboxylase route): step 1/1. In terms of biological role, catalyzes the reversible conversion of 5-aminoimidazole ribonucleotide (AIR) and CO(2) to 4-carboxy-5-aminoimidazole ribonucleotide (CAIR). The protein is Phosphoribosylaminoimidazole carboxylase of Archaeoglobus fulgidus (strain ATCC 49558 / DSM 4304 / JCM 9628 / NBRC 100126 / VC-16).